We begin with the raw amino-acid sequence, 396 residues long: MAKEKFDRSKSHANIGTIGHVDHGKTTLTAAISTVLHKKSGKGTAMAYDQIDGAPEERERGITISTAHVEYETDTRHYAHVDCPGHADYVKNMITGAAQMDGAILVVSAADGPMPQTREHILLSKNVGVPYIVVFLNKCDMVDDEELLELVEMEVRDLLSEYDFPGDDVPVVKGSALKALEGDAEYEEKILELMAAVDEYIPTPERDTDKPFMMPVEDVFSITGRGTVATGRVERGQVKVGDEVEIIGLQEENSKTTVTGVEMFRKLLDYAEAGDNIGALLRGVAREDIQRGQVLAKPGTITPHSKFKAEVYVLSKEEGGRHTPFFSNYRPQFYFRTTDVTGIINLPEGVEMVMPGDNTEMIVELISTIAIEEGTRFSIREGGRTVGSGVVSTITE.

The tr-type G domain occupies 10-205 (KSHANIGTIG…AVDEYIPTPE (196 aa)). The interval 19-26 (GHVDHGKT) is G1. 19-26 (GHVDHGKT) contacts GTP. Mg(2+) is bound at residue Thr26. A G2 region spans residues 61-65 (GITIS). The G3 stretch occupies residues 82–85 (DCPG). GTP contacts are provided by residues 82 to 86 (DCPGH) and 137 to 140 (NKCD). Positions 137–140 (NKCD) are G4. Positions 175–177 (SAL) are G5.

The protein belongs to the TRAFAC class translation factor GTPase superfamily. Classic translation factor GTPase family. EF-Tu/EF-1A subfamily. As to quaternary structure, monomer.

The protein resides in the cytoplasm. The catalysed reaction is GTP + H2O = GDP + phosphate + H(+). In terms of biological role, GTP hydrolase that promotes the GTP-dependent binding of aminoacyl-tRNA to the A-site of ribosomes during protein biosynthesis. This chain is Elongation factor Tu, found in Bacillus velezensis (strain DSM 23117 / BGSC 10A6 / LMG 26770 / FZB42) (Bacillus amyloliquefaciens subsp. plantarum).